We begin with the raw amino-acid sequence, 427 residues long: UPF0761 membrane protein Cphamn1_1013 (427 aa).

A run of 6 helical transmembrane segments spans residues 51 to 71 (LLSL…SPVF), 107 to 127 (TVPT…ISTI), 147 to 167 (FTLY…GLVA), 188 to 208 (ILSY…YMLV), 218 to 238 (AVSG…WFSF), and 251 to 271 (GALS…VVAL).

This sequence belongs to the UPF0761 family.

Its subcellular location is the cell inner membrane. The sequence is that of UPF0761 membrane protein Cphamn1_1013 from Chlorobium phaeobacteroides (strain BS1).